The sequence spans 78 residues: uncharacterized protein (78 aa).

The first 45 residues, methionine 1–alanine 45, serve as a signal peptide directing secretion.

This sequence to E.coli YkfL.

This is an uncharacterized protein from Escherichia coli (strain K12).